The chain runs to 544 residues: Chaperonin GroEL (544 aa).

ATP is bound by residues 30 to 33 (TLGP), K51, 87 to 91 (DGTTT), G415, and D495.

It belongs to the chaperonin (HSP60) family. Forms a cylinder of 14 subunits composed of two heptameric rings stacked back-to-back. Interacts with the co-chaperonin GroES.

The protein resides in the cytoplasm. The enzyme catalyses ATP + H2O + a folded polypeptide = ADP + phosphate + an unfolded polypeptide.. Together with its co-chaperonin GroES, plays an essential role in assisting protein folding. The GroEL-GroES system forms a nano-cage that allows encapsulation of the non-native substrate proteins and provides a physical environment optimized to promote and accelerate protein folding. This chain is Chaperonin GroEL, found in Methylobacillus flagellatus (strain ATCC 51484 / DSM 6875 / VKM B-1610 / KT).